Here is a 109-residue protein sequence, read N- to C-terminus: Red pigment-concentrating prohormone (109 aa).

The N-terminal stretch at Met1 to Ala25 is a signal peptide. The residue at position 26 (Gln26) is a Pyrrolidone carboxylic acid. A Tryptophan amide modification is found at Trp33. A disordered region spans residues Gly34–Gly78. 2 stretches are compositionally biased toward low complexity: residues Glu49 to Gly59 and Pro67 to Gly78.

Belongs to the AKH/HRTH/RPCH family.

The protein localises to the secreted. Its function is as follows. This hormone adapts the animal to light backgrounds by stimulating concentration of the pigment of its red body-chromatophores. The sequence is that of Red pigment-concentrating prohormone from Callinectes sapidus (Blue crab).